We begin with the raw amino-acid sequence, 228 residues long: uncharacterized protein (228 aa).

The tRNA-binding domain maps to 99–207; that stretch reads LANKVPFVVC…PKIKVGKPFI (109 aa).

This is an uncharacterized protein from Mycoplasma genitalium (strain ATCC 33530 / DSM 19775 / NCTC 10195 / G37) (Mycoplasmoides genitalium).